The chain runs to 67 residues: Large ribosomal subunit protein bL35 (67 aa).

This sequence belongs to the bacterial ribosomal protein bL35 family.

This Methylorubrum populi (strain ATCC BAA-705 / NCIMB 13946 / BJ001) (Methylobacterium populi) protein is Large ribosomal subunit protein bL35.